Here is a 185-residue protein sequence, read N- to C-terminus: Transcription termination/antitermination protein NusG (185 aa).

Residues 134–164 (VGKRVRIVDGAFSGFEAPITEINGDKLTLTV) form the KOW domain.

It belongs to the NusG family.

In terms of biological role, participates in transcription elongation, termination and antitermination. The sequence is that of Transcription termination/antitermination protein NusG from Lactococcus lactis subsp. lactis (strain IL1403) (Streptococcus lactis).